We begin with the raw amino-acid sequence, 127 residues long: Putative pre-16S rRNA nuclease (127 aa).

This sequence belongs to the YqgF nuclease family.

It is found in the cytoplasm. In terms of biological role, could be a nuclease involved in processing of the 5'-end of pre-16S rRNA. In Campylobacter jejuni subsp. jejuni serotype O:23/36 (strain 81-176), this protein is Putative pre-16S rRNA nuclease.